The sequence spans 738 residues: Catalase-peroxidase (738 aa).

The segment covering 1-16 (MSENHDAIVTDAKTEE) has biased composition (basic and acidic residues). Residues 1-37 (MSENHDAIVTDAKTEEAGGCPVAHGRAPHPTQGGGNR) are disordered. Residues 108–231 (WHSAGTYRIS…LGAVQMGLIY (124 aa)) constitute a cross-link (tryptophyl-tyrosyl-methioninium (Trp-Tyr) (with M-257)). Histidine 109 serves as the catalytic Proton acceptor. The tryptophyl-tyrosyl-methioninium (Tyr-Met) (with W-108) cross-link spans 231–257 (YVNPEGPNGNPDPIAAARDIRETFGRM). Residue histidine 272 coordinates heme b.

Belongs to the peroxidase family. Peroxidase/catalase subfamily. In terms of assembly, homodimer or homotetramer. Requires heme b as cofactor. Post-translationally, formation of the three residue Trp-Tyr-Met cross-link is important for the catalase, but not the peroxidase activity of the enzyme.

It catalyses the reaction H2O2 + AH2 = A + 2 H2O. The enzyme catalyses 2 H2O2 = O2 + 2 H2O. Its function is as follows. Bifunctional enzyme with both catalase and broad-spectrum peroxidase activity. The polypeptide is Catalase-peroxidase (Streptomyces ambofaciens).